A 296-amino-acid chain; its full sequence is MKFQDMILSLNQFWGEQGCIIAQPYDMEKGAGTFNPNTFLRALGPEPWKVAYIEPSRRPTDGRYGENPNRLQHYFQYQVIIKPSPDNIQELYLQSLERLGVNPKEHDIRFVEDNWESPTLGAWGLGWEVWLDGMEVTQFTYFQQCGGIDCKPVCAEITYGLERLAMYIQNKESVYDIEYVGDITYGDIYLQNEIDYSYYNFRAADVEALQAWFEMYEKEAIRIAEKGLVLPAYDYVLKCSHTFNLLDARGAISVTERTGYIARVRNLARLCAQAYVEQRERLGYPLLKEQSGKEAE.

This sequence belongs to the class-II aminoacyl-tRNA synthetase family. As to quaternary structure, tetramer of two alpha and two beta subunits.

It localises to the cytoplasm. The enzyme catalyses tRNA(Gly) + glycine + ATP = glycyl-tRNA(Gly) + AMP + diphosphate. This Desulfitobacterium hafniense (strain Y51) protein is Glycine--tRNA ligase alpha subunit.